Here is a 276-residue protein sequence, read N- to C-terminus: Large ribosomal subunit protein uL2 (276 aa).

Disordered stretches follow at residues 29–54 (PEKS…SRRR) and 224–276 (AMNP…RGQR). Residues 256-276 (YKTRSKKKPSSKLIVKRRGQR) show a composition bias toward basic residues.

Belongs to the universal ribosomal protein uL2 family. Part of the 50S ribosomal subunit. Forms a bridge to the 30S subunit in the 70S ribosome.

One of the primary rRNA binding proteins. Required for association of the 30S and 50S subunits to form the 70S ribosome, for tRNA binding and peptide bond formation. It has been suggested to have peptidyltransferase activity; this is somewhat controversial. Makes several contacts with the 16S rRNA in the 70S ribosome. This Maridesulfovibrio salexigens (strain ATCC 14822 / DSM 2638 / NCIMB 8403 / VKM B-1763) (Desulfovibrio salexigens) protein is Large ribosomal subunit protein uL2.